The chain runs to 376 residues: 23S rRNA (uracil(747)-C(5))-methyltransferase RlmC (376 aa).

The [4Fe-4S] cluster site is built by Cys-3, Cys-11, Cys-14, and Cys-87. Positions 212, 241, 262, and 307 each coordinate S-adenosyl-L-methionine. The active-site Nucleophile is the Cys-334.

The protein belongs to the class I-like SAM-binding methyltransferase superfamily. RNA M5U methyltransferase family. RlmC subfamily.

The enzyme catalyses uridine(747) in 23S rRNA + S-adenosyl-L-methionine = 5-methyluridine(747) in 23S rRNA + S-adenosyl-L-homocysteine + H(+). In terms of biological role, catalyzes the formation of 5-methyl-uridine at position 747 (m5U747) in 23S rRNA. This is 23S rRNA (uracil(747)-C(5))-methyltransferase RlmC from Citrobacter koseri (strain ATCC BAA-895 / CDC 4225-83 / SGSC4696).